The primary structure comprises 60 residues: MAVQQNKKSRSARDMRRSHDALEANALSVEKSTGEVHLRHHVSPDGFYRGRKVIDKGSDE.

This sequence belongs to the bacterial ribosomal protein bL32 family.

In Azotobacter vinelandii (strain DJ / ATCC BAA-1303), this protein is Large ribosomal subunit protein bL32.